The primary structure comprises 108 residues: Peptidyl-prolyl cis-trans isomerase FKBP1A (108 aa).

The PPIase FKBP-type domain maps to 20 to 108 (GQTCVVHYTG…VFDVELLKLE (89 aa)). K53 is modified (N6-acetyllysine; alternate). K53 carries the post-translational modification N6-succinyllysine; alternate.

This sequence belongs to the FKBP-type PPIase family. FKBP1 subfamily. Interacts with TGFBR1; prevents TGFBR1 phosphorylation by TGFBR2 and stabilizes it in the inactive conformation. Interacts with ACVR1B and SMAD7. Identified in a complex composed of RYR1, PDE4D, PKA, FKBP1A and protein phosphatase 1 (PP1). Interacts directly with RYR2 and RYR3. Interacts with GLMN; rapamycin and FK506 abolish the interaction with GLMN in a dose dependent manner. Interacts directly with RYR1.

The protein localises to the cytoplasm. It is found in the cytosol. Its subcellular location is the sarcoplasmic reticulum membrane. It catalyses the reaction [protein]-peptidylproline (omega=180) = [protein]-peptidylproline (omega=0). With respect to regulation, inhibited by both FK506 and rapamycin. Functionally, keeps in an inactive conformation TGFBR1, the TGF-beta type I serine/threonine kinase receptor, preventing TGF-beta receptor activation in absence of ligand. Recruits SMAD7 to ACVR1B which prevents the association of SMAD2 and SMAD3 with the activin receptor complex, thereby blocking the activin signal. May modulate the RYR1 calcium channel activity. PPIases accelerate the folding of proteins. It catalyzes the cis-trans isomerization of proline imidic peptide bonds in oligopeptides. This Homo sapiens (Human) protein is Peptidyl-prolyl cis-trans isomerase FKBP1A (FKBP1A).